The following is a 262-amino-acid chain: Virulence plasmid protein pGP6-D-related protein (262 aa).

The protein belongs to the UPF0137 (pGP6-D) family.

This Chlamydia muridarum (strain MoPn / Nigg) protein is Virulence plasmid protein pGP6-D-related protein.